The sequence spans 266 residues: 5'-nucleotidase SurE (266 aa).

Aspartate 8, aspartate 9, serine 39, and asparagine 93 together coordinate a divalent metal cation.

Belongs to the SurE nucleotidase family. The cofactor is a divalent metal cation.

It localises to the cytoplasm. The enzyme catalyses a ribonucleoside 5'-phosphate + H2O = a ribonucleoside + phosphate. In terms of biological role, nucleotidase that shows phosphatase activity on nucleoside 5'-monophosphates. The protein is 5'-nucleotidase SurE of Thermococcus gammatolerans (strain DSM 15229 / JCM 11827 / EJ3).